Here is a 244-residue protein sequence, read N- to C-terminus: Lectin (244 aa).

Residues 1–20 form a disordered region; sequence TETETTSFSIPKTDQPSSPK.

Belongs to the leguminous lectin family. Homodimer. In contrast to other Lathyrus lectins which are tetramer of two alpha and two beta chains.

The chain is Lectin from Lathyrus sphaericus (Spring vetchling).